A 298-amino-acid chain; its full sequence is Inosose dehydratase (298 aa).

Belongs to the IolE/MocC family. The cofactor is glutathione. Requires Co(2+) as cofactor. Mn(2+) serves as cofactor.

The enzyme catalyses scyllo-inosose = 3D-3,5/4-trihydroxycyclohexane-1,2-dione + H2O. The protein operates within polyol metabolism; myo-inositol degradation into acetyl-CoA; acetyl-CoA from myo-inositol: step 2/7. Its function is as follows. Catalyzes the dehydration of inosose (2-keto-myo-inositol, 2KMI or 2,4,6/3,5-pentahydroxycyclohexanone) to 3D-(3,5/4)-trihydroxycyclohexane-1,2-dione (D-2,3-diketo-4-deoxy-epi-inositol). This chain is Inosose dehydratase, found in Clostridium beijerinckii (strain ATCC 51743 / NCIMB 8052) (Clostridium acetobutylicum).